We begin with the raw amino-acid sequence, 105 residues long: Transcription factor S (105 aa).

Zn(2+) is bound by residues Cys-5, Cys-8, Cys-21, Cys-24, Cys-66, Cys-69, Cys-94, and Cys-97. Residues 5–24 (CPKCNNIMLPKNGRLKCTVC) form a C4-type zinc finger. The segment at 62–102 (TRIECPSCGNMEASWWLQQTRCADEPETRFYKCKKCGHTWR) adopts a TFIIS-type zinc-finger fold.

This sequence belongs to the archaeal RpoM/eukaryotic RPA12/RPB9/RPC11 RNA polymerase family.

Functionally, induces RNA cleavage activity in the RNA polymerase. In its presence, the cleavage activity of the RNA polymerase truncates the RNA back to position +15 in a stepwise manner by releasing mainly dinucleotides from the 3'-end of the nascent RNA. The truncated RNAs are able to continue elongation. Involved in transcriptional proofreading and fidelity. Misincorporation of nucleotides during elongation of transcription leads to arrested elongation complexes which are rescued by TFS-promoted removal of a dinucleotide from the 3'-end. TFS is able to induce a cleavage resynthesis cycle in stalled elongation complexes (resulting from the next missing nucleotide or a reduced incorporation rate of a wrong nucleotide) preventing misincorporation and enabling proofreading in a post-incorporation manner. Pausing of elongation complexes is the main determinant of TFS-induced RNA cleavage. This chain is Transcription factor S, found in Methanothermococcus thermolithotrophicus (Methanococcus thermolithotrophicus).